The following is a 159-amino-acid chain: Ribosomal RNA large subunit methyltransferase H (159 aa).

The S-adenosyl-L-methionine site is built by Leu76 and Gly108.

The protein belongs to the RNA methyltransferase RlmH family. As to quaternary structure, homodimer.

It localises to the cytoplasm. It catalyses the reaction pseudouridine(1915) in 23S rRNA + S-adenosyl-L-methionine = N(3)-methylpseudouridine(1915) in 23S rRNA + S-adenosyl-L-homocysteine + H(+). In terms of biological role, specifically methylates the pseudouridine at position 1915 (m3Psi1915) in 23S rRNA. The chain is Ribosomal RNA large subunit methyltransferase H from Limosilactobacillus reuteri (strain DSM 20016) (Lactobacillus reuteri).